We begin with the raw amino-acid sequence, 364 residues long: Sec-independent protein translocase protein TatC (364 aa).

The next 7 membrane-spanning stretches (helical) occupy residues 42–62 (IALLAFAIAGVVCFIFEPRIF), 107–127 (MIAAVVVSSPVWLYQLWSFIT), 139–159 (LTFVGVSLVLFATGAVFAYLT), 160–180 (LSTGLGLLLGFGGNGLVSVLD), 194–214 (IFGLSFEVPLLVMMLNLAGIV), 225–245 (PEIFLVFVFAAVVTPSQDPFT), and 246–266 (MLALGLPMVLLYEVALIIGWL). Positions 277–364 (TSPYADLDDD…STDVTHGDIT (88 aa)) are disordered. Residues 282–295 (DLDDDETSPLDFDD) show a composition bias toward acidic residues. Residues 301 to 320 (AASAGPAATATSPGTANPPG) show a composition bias toward low complexity. Over residues 324–344 (PPGTANPVGTANPVGTGSSTP) the composition is skewed to polar residues.

It belongs to the TatC family. In terms of assembly, the Tat system comprises two distinct complexes: a TatABC complex, containing multiple copies of TatA, TatB and TatC subunits, and a separate TatA complex, containing only TatA subunits. Substrates initially bind to the TatABC complex, which probably triggers association of the separate TatA complex to form the active translocon.

The protein resides in the cell membrane. Its function is as follows. Part of the twin-arginine translocation (Tat) system that transports large folded proteins containing a characteristic twin-arginine motif in their signal peptide across membranes. Together with TatB, TatC is part of a receptor directly interacting with Tat signal peptides. The sequence is that of Sec-independent protein translocase protein TatC from Frankia casuarinae (strain DSM 45818 / CECT 9043 / HFP020203 / CcI3).